The primary structure comprises 679 residues: Translation initiation factor IF-2 (679 aa).

The 170-residue stretch at Lys-178–Lys-347 folds into the tr-type G domain. A G1 region spans residues Gly-187 to Thr-194. Gly-187–Thr-194 is a GTP binding site. Positions Gly-212–His-216 are G2. Positions Asp-233 to Gly-236 are G3. GTP is bound by residues Asp-233–His-237 and Asn-287–Asp-290. A G4 region spans residues Asn-287–Asp-290. Positions Ser-323–Lys-325 are G5.

It belongs to the TRAFAC class translation factor GTPase superfamily. Classic translation factor GTPase family. IF-2 subfamily.

It localises to the cytoplasm. One of the essential components for the initiation of protein synthesis. Protects formylmethionyl-tRNA from spontaneous hydrolysis and promotes its binding to the 30S ribosomal subunits. Also involved in the hydrolysis of GTP during the formation of the 70S ribosomal complex. The polypeptide is Translation initiation factor IF-2 (Clostridium perfringens (strain ATCC 13124 / DSM 756 / JCM 1290 / NCIMB 6125 / NCTC 8237 / Type A)).